A 1608-amino-acid polypeptide reads, in one-letter code: Adenylate cyclase type 10 (1608 aa).

2 Guanylate cyclase domains span residues 42–179 (VLMF…RLAQ) and 293–418 (TIVF…ARMM). 2 residues coordinate Mg(2+): aspartate 47 and isoleucine 48. Residue 47–52 (DISGFT) participates in ATP binding. Hydrogencarbonate is bound at residue lysine 95. Aspartate 99 contributes to the Mg(2+) binding site. Residues aspartate 99 and lysine 144 each coordinate ATP. Valine 167, arginine 176, and methionine 337 together coordinate hydrogencarbonate. ATP is bound by residues valine 406 and 412-416 (NIAAR).

Belongs to the adenylyl cyclase class-4/guanylyl cyclase family. The cofactor is Mg(2+). Requires Mn(2+) as cofactor. Cleavage may occur to generate the active 48 kDa form. Detected in testis (at protein level). Preferentially expressed in testis.

The protein localises to the cell membrane. Its subcellular location is the cytoplasm. It is found in the cytoskeleton. The protein resides in the perinuclear region. It localises to the nucleus. The protein localises to the cell projection. Its subcellular location is the cilium. It is found in the mitochondrion. It carries out the reaction ATP = 3',5'-cyclic AMP + diphosphate. With respect to regulation, activated by manganese or magnesium ions. In the presence of magnesium ions, the enzyme is activated by bicarbonate. Calcium mildly increases the enzyme activity, also in the presence of magnesium ions. Its function is as follows. Catalyzes the formation of the signaling molecule cAMP. May function as sensor that mediates responses to changes in cellular bicarbonate and CO(2) levels. Has a critical role in mammalian spermatogenesis by producing the cAMP which regulates cAMP-responsive nuclear factors indispensable for sperm maturation in the epididymis. Induces capacitation, the maturational process that sperm undergo prior to fertilization. Involved in ciliary beat regulation. The sequence is that of Adenylate cyclase type 10 (Adcy10) from Rattus norvegicus (Rat).